A 363-amino-acid chain; its full sequence is G-protein coupled receptor 6 (363 aa).

Residues 1–75 lie on the Extracellular side of the membrane; it reads MNASAAALNE…SGLLLSAVNP (75 aa). 2 N-linked (GlcNAc...) asparagine glycosylation sites follow: asparagine 2 and asparagine 9. Residues 28–51 form a disordered region; that stretch reads AGTPDTSEWGPPAASAALGGGGGP. The N-linked (GlcNAc...) asparagine glycan is linked to asparagine 52. Residues 76-95 traverse the membrane as a helical segment; the sequence is WDVLLCVSGTVIAGENALVV. The Cytoplasmic portion of the chain corresponds to 96–107; it reads ALIASTPALRTP. A helical membrane pass occupies residues 108-131; that stretch reads MFVLVGSLATADLLAGCGLILHFV. Residues 132-143 lie on the Extracellular side of the membrane; that stretch reads FQYVVPSETVSL. Residues 144–165 form a helical membrane-spanning segment; the sequence is LMVGFLVASFAASVSSLLAITV. The Cytoplasmic segment spans residues 166-186; it reads DRYLSLYNALTYYSRRTLLGV. The helical transmembrane segment at 187 to 206 threads the bilayer; sequence HLLLAATWTVSLGLGLLPVL. Residues 207 to 231 lie on the Extracellular side of the membrane; that stretch reads GWNCLADRASCSVVRPLTRSHVALL. Residues 232 to 250 form a helical membrane-spanning segment; that stretch reads STSFFVVFGIMLHLYVRIC. Topologically, residues 251-278 are cytoplasmic; it reads QVVWRHAHQIALQQHCLAPPHLAATRKG. A helical membrane pass occupies residues 279–305; it reads VGTLAVVLGTFGASWLPFAIYCVVGSQ. Topologically, residues 306–310 are extracellular; sequence EDPAI. Residues 311-332 form a helical membrane-spanning segment; sequence YTYATLLPATYNSMINPIIYAF. The Cytoplasmic portion of the chain corresponds to 333–363; it reads RNQEIQRALWLLFCGCFQSKVPFRSRSPSEV. Cysteine 346 is lipidated: S-palmitoyl cysteine. Phosphoserine is present on residues serine 357, serine 359, and serine 361.

This sequence belongs to the G-protein coupled receptor 1 family. As to expression, expressed in the brain, with a prominent distribution in striatum.

The protein resides in the cell membrane. Orphan receptor with constitutive G(s) signaling activity that activate cyclic AMP. Promotes neurite outgrowth and blocks myelin inhibition in neurons. The protein is G-protein coupled receptor 6 (Gpr6) of Rattus norvegicus (Rat).